Here is a 302-residue protein sequence, read N- to C-terminus: Zinc transporter ZIP1 (302 aa).

Over 1-6 the chain is Extracellular; sequence MEYLLQ. Residues 7 to 27 traverse the membrane as a helical segment; sequence VKIAALVGLLFLTLIFGFIPA. Topologically, residues 28–44 are cytoplasmic; sequence RVKWFRDTDGTETHRTV. Residues 45-65 form a helical membrane-spanning segment; that stretch reads LSLISCFAGGVFLSACFLDII. Over 66–80 the chain is Extracellular; that stretch reads PDYLSDINTELHARQ. The chain crosses the membrane as a helical span at residues 81-101; it reads LETSFPLPEFIMAAGFFTVLI. Residues 102 to 158 are Cytoplasmic-facing; sequence LERIVLNCKEMRATHEERTTLIPERKSGHGHGHGDGPDPESSGHHVHVDFQAHSPFR. The interval 123-145 is disordered; that stretch reads IPERKSGHGHGHGDGPDPESSGH. The helical transmembrane segment at 159–179 threads the bilayer; that stretch reads SFMLFLSLSLHSIFEGLAIGL. At 180–185 the chain is on the extracellular side; sequence QTTDPK. A helical membrane pass occupies residues 186–206; that stretch reads VVEICIAILVHKSIIVFSLAV. The Cytoplasmic portion of the chain corresponds to 207 to 216; that stretch reads KLVQSAIPPL. Residues 217-237 traverse the membrane as a helical segment; the sequence is WVAAYIGVFALMSPVGIAIGI. Over 238–251 the chain is Extracellular; the sequence is SVMEAQLAAGPLIQ. Residues 252–272 traverse the membrane as a helical segment; sequence AILEGFAAGTFVYITFLEILP. The Cytoplasmic portion of the chain corresponds to 273–281; the sequence is HELNSPGKQ. Residues 282-302 form a helical membrane-spanning segment; that stretch reads LLKVLFLLLGFSIMAALSFLG.

It belongs to the ZIP transporter (TC 2.A.5) family. In terms of tissue distribution, highest levels in ovary, lower levels in intestine and gill, barely detected in kidney.

It localises to the cell membrane. The protein localises to the endoplasmic reticulum membrane. The enzyme catalyses Zn(2+)(in) = Zn(2+)(out). Functionally, transporter for the divalent cation Zn(2+). Mediates the influx of Zn(2+) into cells from extracellular space. This Takifugu rubripes (Japanese pufferfish) protein is Zinc transporter ZIP1 (slc39a1).